The chain runs to 217 residues: Twisted gastrulation protein homolog 1-A (217 aa).

The signal sequence occupies residues 1-26 (MRPALFLCPVLISVLFLLSSLSLISG). Residues Asn53 and Asn147 are each glycosylated (N-linked (GlcNAc...) asparagine).

It belongs to the twisted gastrulation protein family.

The protein resides in the secreted. Involved in dorsal-ventral patterning. Appears to function predominantly as a ventralizing factor, through its actions as a BMP signaling agonist, acting through both chd-dependent and chd-independent mechanisms. May also antagonize BMP signaling, probably via formation of ternary complexes with chd and BMPs, resulting in dorsalization. The polypeptide is Twisted gastrulation protein homolog 1-A (twsg1a) (Danio rerio (Zebrafish)).